The sequence spans 533 residues: Na(+)/H(+) antiporter NhaB (533 aa).

11 helical membrane passes run 10 to 30 (IGNF…SFLI), 67 to 87 (PGGL…SQVL), 96 to 116 (VLLL…LLLF), 131 to 165 (VSLL…FYSI), 209 to 229 (LLMH…VGEP), 247 to 267 (IRMS…CYIV), 310 to 330 (AFIG…VGLI), 355 to 375 (EEAL…AVII), 396 to 416 (LVIF…VFVG), 454 to 474 (ATPN…APLI), and 485 to 505 (ALPY…IGFL).

This sequence belongs to the NhaB Na(+)/H(+) (TC 2.A.34) antiporter family.

Its subcellular location is the cell inner membrane. The enzyme catalyses 2 Na(+)(in) + 3 H(+)(out) = 2 Na(+)(out) + 3 H(+)(in). Its function is as follows. Na(+)/H(+) antiporter that extrudes sodium in exchange for external protons. In Shewanella oneidensis (strain ATCC 700550 / JCM 31522 / CIP 106686 / LMG 19005 / NCIMB 14063 / MR-1), this protein is Na(+)/H(+) antiporter NhaB.